The chain runs to 208 residues: Transmembrane emp24 domain-containing protein p24beta2 (208 aa).

The signal sequence occupies residues 1–21 (MSLKGTIVLLGLLWSFQATLG). The Lumenal portion of the chain corresponds to 22–176 (IRFVIDREEC…ENMSKRAVHK (155 aa)). One can recognise a GOLD domain in the interval 29-116 (EECFSHKAEY…HETIDFDVQL (88 aa)). Residues 134 to 149 (LMEQISKLEEALYNIQ) are a coiled coil. An N-linked (GlcNAc...) asparagine glycan is attached at Asn-168. A helical transmembrane segment spans residues 177–195 (ALFESFALIGASFLQVYLL). At 196-208 (RRLFERKLGMSRV) the chain is on the cytoplasmic side. The COPII vesicle coat-binding signature appears at 198–199 (LF). Residues 198–208 (LFERKLGMSRV) carry the COPI vesicle coat-binding motif. The short motif at 207–208 (RV) is the Required for the export from the endoplasmic reticulum to the Golgi element.

It belongs to the EMP24/GP25L family. Probably oligomerizes with other members of the EMP24/GP25L family. Associates with the COPI vesicle coat (coatomer). Associates with the COPII vesicle coat (coatomer). Interacts with p24delta5.

It localises to the golgi apparatus. Its subcellular location is the cis-Golgi network membrane. The protein localises to the golgi stack membrane. Functionally, involved in vesicular protein trafficking. Mainly functions in the early secretory pathway but also in post-Golgi membranes. Thought to act as cargo receptor at the lumenal side for incorporation of secretory cargo molecules into transport vesicles and to be involved in vesicle coat formation at the cytoplasmic side. Interacts with p24delta5 at endoplasmic reticulum export sites for endoplasmic reticulum exit and coupled transport to the Golgi apparatus. In Arabidopsis thaliana (Mouse-ear cress), this protein is Transmembrane emp24 domain-containing protein p24beta2.